Consider the following 381-residue polypeptide: Queuine tRNA-ribosyltransferase (381 aa).

D96 serves as the catalytic Proton acceptor. Substrate-binding positions include D96–F100, D150, Q193, and G220. Residues G251–S257 are RNA binding. D270 (nucleophile) is an active-site residue. Residues T275 to R279 are RNA binding; important for wobble base 34 recognition. C308, C310, C313, and H339 together coordinate Zn(2+).

This sequence belongs to the queuine tRNA-ribosyltransferase family. As to quaternary structure, homodimer. Within each dimer, one monomer is responsible for RNA recognition and catalysis, while the other monomer binds to the replacement base PreQ1. Requires Zn(2+) as cofactor.

It carries out the reaction 7-aminomethyl-7-carbaguanine + guanosine(34) in tRNA = 7-aminomethyl-7-carbaguanosine(34) in tRNA + guanine. The protein operates within tRNA modification; tRNA-queuosine biosynthesis. Functionally, catalyzes the base-exchange of a guanine (G) residue with the queuine precursor 7-aminomethyl-7-deazaguanine (PreQ1) at position 34 (anticodon wobble position) in tRNAs with GU(N) anticodons (tRNA-Asp, -Asn, -His and -Tyr). Catalysis occurs through a double-displacement mechanism. The nucleophile active site attacks the C1' of nucleotide 34 to detach the guanine base from the RNA, forming a covalent enzyme-RNA intermediate. The proton acceptor active site deprotonates the incoming PreQ1, allowing a nucleophilic attack on the C1' of the ribose to form the product. After dissociation, two additional enzymatic reactions on the tRNA convert PreQ1 to queuine (Q), resulting in the hypermodified nucleoside queuosine (7-(((4,5-cis-dihydroxy-2-cyclopenten-1-yl)amino)methyl)-7-deazaguanosine). The polypeptide is Queuine tRNA-ribosyltransferase (Enterococcus faecalis (strain ATCC 700802 / V583)).